Reading from the N-terminus, the 251-residue chain is Phosphate import ATP-binding protein PstB (251 aa).

Positions 5 to 246 (IKIRGVNFFY…PKDKRTEDYI (242 aa)) constitute an ABC transporter domain. ATP is bound at residue 37–44 (GPSGCGKS).

It belongs to the ABC transporter superfamily. Phosphate importer (TC 3.A.1.7) family. As to quaternary structure, the complex is composed of two ATP-binding proteins (PstB), two transmembrane proteins (PstC and PstA) and a solute-binding protein (PstS).

The protein localises to the cell membrane. It carries out the reaction phosphate(out) + ATP + H2O = ADP + 2 phosphate(in) + H(+). Its function is as follows. Part of the ABC transporter complex PstSACB involved in phosphate import. Responsible for energy coupling to the transport system. The polypeptide is Phosphate import ATP-binding protein PstB (Dehalococcoides mccartyi (strain ATCC BAA-2266 / KCTC 15142 / 195) (Dehalococcoides ethenogenes (strain 195))).